Reading from the N-terminus, the 333-residue chain is Adenosine deaminase (333 aa).

Zn(2+) contacts are provided by histidine 12 and histidine 14. Histidine 14, aspartate 16, and glycine 170 together coordinate substrate. Histidine 197 lines the Zn(2+) pocket. Glutamate 200 serves as the catalytic Proton donor. Residue aspartate 278 coordinates Zn(2+). A substrate-binding site is contributed by aspartate 279.

The protein belongs to the metallo-dependent hydrolases superfamily. Adenosine and AMP deaminases family. Adenosine deaminase subfamily. Zn(2+) serves as cofactor.

The enzyme catalyses adenosine + H2O + H(+) = inosine + NH4(+). It catalyses the reaction 2'-deoxyadenosine + H2O + H(+) = 2'-deoxyinosine + NH4(+). Functionally, catalyzes the hydrolytic deamination of adenosine and 2-deoxyadenosine. This chain is Adenosine deaminase, found in Salmonella gallinarum (strain 287/91 / NCTC 13346).